We begin with the raw amino-acid sequence, 666 residues long: Putative L-type lectin-domain containing receptor kinase V.1 (666 aa).

The N-terminal stretch at Met1–Cys18 is a signal peptide. Topologically, residues Gln19 to Thr289 are extracellular. A legume-lectin like region spans residues Glu27 to Lys257. Residues Asn29, Asn74, Asn123, Asn176, Asn204, and Asn259 are each glycosylated (N-linked (GlcNAc...) asparagine). Residues Ile290 to Phe310 traverse the membrane as a helical segment. The Cytoplasmic segment spans residues Leu311–Arg666. The Protein kinase domain occupies Phe344–Leu625. ATP-binding positions include Leu350–Val358 and Lys373. Catalysis depends on Asp469, which acts as the Proton acceptor.

In the C-terminal section; belongs to the protein kinase superfamily. Ser/Thr protein kinase family. It in the N-terminal section; belongs to the leguminous lectin family.

Its subcellular location is the cell membrane. The catalysed reaction is L-seryl-[protein] + ATP = O-phospho-L-seryl-[protein] + ADP + H(+). The enzyme catalyses L-threonyl-[protein] + ATP = O-phospho-L-threonyl-[protein] + ADP + H(+). The polypeptide is Putative L-type lectin-domain containing receptor kinase V.1 (LECRK51) (Arabidopsis thaliana (Mouse-ear cress)).